The chain runs to 240 residues: Large ribosomal subunit protein uL2 (240 aa).

Polar residues predominate over residues Met1–Gly11. Disordered regions lie at residues Met1–Lys25 and Gly207–Arg240. Basic residues-rich tracts occupy residues Gly13–Lys25 and Ser224–Arg240.

The protein belongs to the universal ribosomal protein uL2 family. Part of the 50S ribosomal subunit. Forms a bridge to the 30S subunit in the 70S ribosome.

One of the primary rRNA binding proteins. Required for association of the 30S and 50S subunits to form the 70S ribosome, for tRNA binding and peptide bond formation. It has been suggested to have peptidyltransferase activity; this is somewhat controversial. Makes several contacts with the 16S rRNA in the 70S ribosome. This is Large ribosomal subunit protein uL2 from Methanococcus maripaludis (strain DSM 14266 / JCM 13030 / NBRC 101832 / S2 / LL).